The primary structure comprises 377 residues: Guanine nucleotide-binding protein subunit beta (377 aa).

7 WD repeats span residues glycine 63–asparagine 93, leucine 105–serine 135, glycine 154–aspartate 185, glycine 202–aspartate 233, glycine 246–aspartate 276, glycine 292–aspartate 323, and serine 339–alanine 369. 2 consecutive short sequence motifs (DWD box) follow at residues phenylalanine 220–arginine 235 and phenylalanine 263–arginine 278.

This sequence belongs to the WD repeat G protein beta family. As to quaternary structure, g proteins are composed of 3 units, alpha, beta and gamma. Interacts with the gamma subunits GG1 and GG2. The dimers GB1-GG1 and GB1-GG2 interact with NDL1, NDL2 and NDL3. Interacts with WNK8. Interacts with XLG2. Interacts with RACK1A, RACK1B and RACK1C. Interacts with ZAR1 (via GBeta-binding domain). In terms of tissue distribution, expressed in seedlings (especially at the hypocotyl/root junction), roots, leaves (restricted to veins and guard cells), and flowers. Also present in hydathods. Expressed in guard cells, mesophyll tissue of cotyledons, trichomes and whole siliques, but not in seeds.

Its subcellular location is the cell membrane. It is found in the cytoplasm. The protein resides in the nucleus. Its function is as follows. Guanine nucleotide-binding proteins (G proteins) are involved as a modulator or transducer in various transmembrane signaling systems. The beta and gamma chains are required for the GTPase activity, for replacement of GDP by GTP, and for G protein-effector interaction. The heterotrimeric G-protein controls defense responses to necrotrophic and vascular fungi probably by modulating cell wall-related genes expression (e.g. lower xylose content in cell walls); involved in resistance to fungal pathogens such as Alternaria brassicicola and Fusarium oxysporum. Modulates root architecture (e.g. lateral root formation). Acts with XGL3 in the positive regulation of root waving and root skewing. Involved in the asymmetric division of zygote and specification of apical and basal cell lineages. This Arabidopsis thaliana (Mouse-ear cress) protein is Guanine nucleotide-binding protein subunit beta (GB1).